We begin with the raw amino-acid sequence, 384 residues long: Queuine tRNA-ribosyltransferase (384 aa).

The Proton acceptor role is filled by D93. Substrate contacts are provided by residues 93 to 97 (DSGGF), D147, Q202, and G229. Residues 260–266 (GVGYPEE) form an RNA binding region. Residue D279 is the Nucleophile of the active site. The segment at 284–288 (TRAAR) is RNA binding; important for wobble base 34 recognition. Zn(2+)-binding residues include C317, C319, C322, and H348.

The protein belongs to the queuine tRNA-ribosyltransferase family. Homodimer. Within each dimer, one monomer is responsible for RNA recognition and catalysis, while the other monomer binds to the replacement base PreQ1. It depends on Zn(2+) as a cofactor.

It carries out the reaction 7-aminomethyl-7-carbaguanine + guanosine(34) in tRNA = 7-aminomethyl-7-carbaguanosine(34) in tRNA + guanine. Its pathway is tRNA modification; tRNA-queuosine biosynthesis. Catalyzes the base-exchange of a guanine (G) residue with the queuine precursor 7-aminomethyl-7-deazaguanine (PreQ1) at position 34 (anticodon wobble position) in tRNAs with GU(N) anticodons (tRNA-Asp, -Asn, -His and -Tyr). Catalysis occurs through a double-displacement mechanism. The nucleophile active site attacks the C1' of nucleotide 34 to detach the guanine base from the RNA, forming a covalent enzyme-RNA intermediate. The proton acceptor active site deprotonates the incoming PreQ1, allowing a nucleophilic attack on the C1' of the ribose to form the product. After dissociation, two additional enzymatic reactions on the tRNA convert PreQ1 to queuine (Q), resulting in the hypermodified nucleoside queuosine (7-(((4,5-cis-dihydroxy-2-cyclopenten-1-yl)amino)methyl)-7-deazaguanosine). This Koribacter versatilis (strain Ellin345) protein is Queuine tRNA-ribosyltransferase.